The sequence spans 380 residues: Succinyl-diaminopimelate desuccinylase (380 aa).

His70 provides a ligand contact to Zn(2+). The active site involves Asp72. Asp104 lines the Zn(2+) pocket. The active-site Proton acceptor is the Glu138. Glu139, Glu167, and His353 together coordinate Zn(2+).

The protein belongs to the peptidase M20A family. DapE subfamily. In terms of assembly, homodimer. The cofactor is Zn(2+). Co(2+) is required as a cofactor.

The enzyme catalyses N-succinyl-(2S,6S)-2,6-diaminopimelate + H2O = (2S,6S)-2,6-diaminopimelate + succinate. It functions in the pathway amino-acid biosynthesis; L-lysine biosynthesis via DAP pathway; LL-2,6-diaminopimelate from (S)-tetrahydrodipicolinate (succinylase route): step 3/3. In terms of biological role, catalyzes the hydrolysis of N-succinyl-L,L-diaminopimelic acid (SDAP), forming succinate and LL-2,6-diaminopimelate (DAP), an intermediate involved in the bacterial biosynthesis of lysine and meso-diaminopimelic acid, an essential component of bacterial cell walls. In Ectopseudomonas mendocina (strain ymp) (Pseudomonas mendocina), this protein is Succinyl-diaminopimelate desuccinylase.